The primary structure comprises 45 residues: Thymosin beta-15A homolog (45 aa).

A disordered region spans residues 19–45 (KKTNTEEKNTLPSKETIEQEKECVKSS). Residues 21 to 45 (TNTEEKNTLPSKETIEQEKECVKSS) are compositionally biased toward basic and acidic residues.

This sequence belongs to the thymosin beta family.

It is found in the cytoplasm. It localises to the cytoskeleton. Functionally, plays an important role in the organization of the cytoskeleton. Binds to and sequesters actin monomers (G actin) and therefore inhibits actin polymerization. The protein is Thymosin beta-15A homolog of Coturnix japonica (Japanese quail).